Reading from the N-terminus, the 384-residue chain is Glycerol 3-phosphate oxidase (384 aa).

An N-terminal signal peptide occupies residues 1–17; the sequence is MQTIDVLIVGGGVIGTS. Ile-14 is a binding site for FAD. The N-palmitoyl cysteine moiety is linked to residue Cys-18. A lipid anchor (S-diacylglycerol cysteine) is attached at Cys-18. FAD contacts are provided by residues Glu-33, 42 to 43, and 47 to 49; these read TS and SGV. Sn-glycerol 3-phosphate is bound by residues Ser-47 and His-51. Residue His-51 is the Proton acceptor of the active site. Val-177 is an FAD binding site. 2 residues coordinate sn-glycerol 3-phosphate: Lys-258 and Arg-320. FAD is bound at residue 346 to 347; that stretch reads MK. Sn-glycerol 3-phosphate is bound at residue Ser-348. Thr-352 provides a ligand contact to FAD.

Monomer. FAD is required as a cofactor.

It is found in the cytoplasm. The protein resides in the cell membrane. The catalysed reaction is sn-glycerol 3-phosphate + O2 = dihydroxyacetone phosphate + H2O2. It functions in the pathway polyol metabolism; glycerol degradation via glycerol kinase pathway; glycerone phosphate from sn-glycerol 3-phosphate (aerobic route): step 1/1. In terms of biological role, catalyzes the oxidation of glycerol 3-phosphate to dihydroxyacetone phosphate (DHAP), with a reduction of O2 to H2O2. The formation of hydrogen peroxide by this enzyme is crucial for cytotoxic effects on host cells. Does not show any dehydrogenase activity with NAD(+). The protein is Glycerol 3-phosphate oxidase of Mycoplasma genitalium (strain ATCC 33530 / DSM 19775 / NCTC 10195 / G37) (Mycoplasmoides genitalium).